A 227-amino-acid polypeptide reads, in one-letter code: MLVHIPNVLTPEQVSMVRDRLDRAGDAWVDGRATAGYTGAPVKRNQQIAEHSPIARELGDVILAALERNPLFISAALPNQVYPPLFNRYEGGMTFGSHVDGAVRVLPNGVKLRTDVSVTLFLSAPDEYDGGELVIEDAYGVQQVKLPAGDMIVYPATSLHQVTPVTRGVRVASFFWVQSLVRSDAQRALLFDMDTAIQRLNASGADTDACRSLVGCYHNLLRIWSET.

The region spanning glutamine 80–serine 179 is the Fe2OG dioxygenase domain. Fe cation-binding residues include histidine 98, aspartate 100, and histidine 160. Arginine 170 is a 2-oxoglutarate binding site.

It depends on Fe(2+) as a cofactor. Requires L-ascorbate as cofactor.

In Burkholderia ambifaria (strain ATCC BAA-244 / DSM 16087 / CCUG 44356 / LMG 19182 / AMMD) (Burkholderia cepacia (strain AMMD)), this protein is PKHD-type hydroxylase Bamb_4479.